We begin with the raw amino-acid sequence, 360 residues long: Phospho-N-acetylmuramoyl-pentapeptide-transferase (360 aa).

10 helical membrane passes run 27 to 47 (ILSV…MIRM), 73 to 93 (TMGG…WGDL), 97 to 117 (FVWI…VDDW), 132 to 152 (WKYL…FFTA), 164 to 184 (FFKS…YFVI), 199 to 219 (GLAI…AYAG), 236 to 256 (AGEL…FLWF), 263 to 283 (VFMG…MAVI), 288 to 308 (IVLF…MLQV), and 337 to 357 (KIIV…LATL).

Belongs to the glycosyltransferase 4 family. MraY subfamily. It depends on Mg(2+) as a cofactor.

It localises to the cell inner membrane. The enzyme catalyses UDP-N-acetyl-alpha-D-muramoyl-L-alanyl-gamma-D-glutamyl-meso-2,6-diaminopimeloyl-D-alanyl-D-alanine + di-trans,octa-cis-undecaprenyl phosphate = di-trans,octa-cis-undecaprenyl diphospho-N-acetyl-alpha-D-muramoyl-L-alanyl-D-glutamyl-meso-2,6-diaminopimeloyl-D-alanyl-D-alanine + UMP. It participates in cell wall biogenesis; peptidoglycan biosynthesis. Functionally, catalyzes the initial step of the lipid cycle reactions in the biosynthesis of the cell wall peptidoglycan: transfers peptidoglycan precursor phospho-MurNAc-pentapeptide from UDP-MurNAc-pentapeptide onto the lipid carrier undecaprenyl phosphate, yielding undecaprenyl-pyrophosphoryl-MurNAc-pentapeptide, known as lipid I. This is Phospho-N-acetylmuramoyl-pentapeptide-transferase from Alcanivorax borkumensis (strain ATCC 700651 / DSM 11573 / NCIMB 13689 / SK2).